A 179-amino-acid polypeptide reads, in one-letter code: Inner membrane-spanning protein YciB (179 aa).

6 helical membrane passes run 3 to 23 (FLFDLFPVILFFAAFKLADIY), 24 to 44 (TATAVAIGATVLQIGWVWFRH), 49 to 69 (PMQWVSLLIIAVFGGATLVLH), 76 to 96 (WKPTVLYWLFAAALLGSVLVW), 121 to 141 (LAWAGFFAAMGVLNLYVAYQF), and 149 to 169 (FKLFGSMGLMLVFIVAQSVWL).

The protein belongs to the YciB family.

It is found in the cell inner membrane. In terms of biological role, plays a role in cell envelope biogenesis, maintenance of cell envelope integrity and membrane homeostasis. The polypeptide is Inner membrane-spanning protein YciB (Cupriavidus taiwanensis (strain DSM 17343 / BCRC 17206 / CCUG 44338 / CIP 107171 / LMG 19424 / R1) (Ralstonia taiwanensis (strain LMG 19424))).